Consider the following 157-residue polypeptide: S-ribosylhomocysteine lyase (157 aa).

Fe cation contacts are provided by His-53, His-57, and Cys-124.

This sequence belongs to the LuxS family. Homodimer. Requires Fe cation as cofactor.

The enzyme catalyses S-(5-deoxy-D-ribos-5-yl)-L-homocysteine = (S)-4,5-dihydroxypentane-2,3-dione + L-homocysteine. Its function is as follows. Involved in the synthesis of autoinducer 2 (AI-2) which is secreted by bacteria and is used to communicate both the cell density and the metabolic potential of the environment. The regulation of gene expression in response to changes in cell density is called quorum sensing. Catalyzes the transformation of S-ribosylhomocysteine (RHC) to homocysteine (HC) and 4,5-dihydroxy-2,3-pentadione (DPD). In Borreliella afzelii (strain PKo) (Borrelia afzelii), this protein is S-ribosylhomocysteine lyase.